We begin with the raw amino-acid sequence, 1342 residues long: DNA-directed RNA polymerase subunit beta (1342 aa).

It belongs to the RNA polymerase beta chain family. The RNAP catalytic core consists of 2 alpha, 1 beta, 1 beta' and 1 omega subunit. When a sigma factor is associated with the core the holoenzyme is formed, which can initiate transcription.

It carries out the reaction RNA(n) + a ribonucleoside 5'-triphosphate = RNA(n+1) + diphosphate. Its function is as follows. DNA-dependent RNA polymerase catalyzes the transcription of DNA into RNA using the four ribonucleoside triphosphates as substrates. In Buchnera aphidicola subsp. Acyrthosiphon pisum (strain 5A), this protein is DNA-directed RNA polymerase subunit beta.